We begin with the raw amino-acid sequence, 117 residues long: Large ribosomal subunit protein bL20 (117 aa).

The protein belongs to the bacterial ribosomal protein bL20 family.

In terms of biological role, binds directly to 23S ribosomal RNA and is necessary for the in vitro assembly process of the 50S ribosomal subunit. It is not involved in the protein synthesizing functions of that subunit. This is Large ribosomal subunit protein bL20 from Nitratidesulfovibrio vulgaris (strain DP4) (Desulfovibrio vulgaris).